Reading from the N-terminus, the 89-residue chain is Small ribosomal subunit protein uS15 (89 aa).

Residues M1 to V11 show a composition bias toward basic and acidic residues. The tract at residues M1 to S24 is disordered.

Belongs to the universal ribosomal protein uS15 family. Part of the 30S ribosomal subunit. Forms a bridge to the 50S subunit in the 70S ribosome, contacting the 23S rRNA.

In terms of biological role, one of the primary rRNA binding proteins, it binds directly to 16S rRNA where it helps nucleate assembly of the platform of the 30S subunit by binding and bridging several RNA helices of the 16S rRNA. Functionally, forms an intersubunit bridge (bridge B4) with the 23S rRNA of the 50S subunit in the ribosome. The sequence is that of Small ribosomal subunit protein uS15 from Rhodopseudomonas palustris (strain TIE-1).